The chain runs to 235 residues: Small ribosomal subunit protein eS4 (235 aa).

An S4 RNA-binding domain is found at 37–100 (LPLGIIIRDI…NEAYRMLQDE (64 aa)).

The protein belongs to the eukaryotic ribosomal protein eS4 family.

The chain is Small ribosomal subunit protein eS4 from Methanosarcina acetivorans (strain ATCC 35395 / DSM 2834 / JCM 12185 / C2A).